The chain runs to 194 residues: Holliday junction branch migration complex subunit RuvA (194 aa).

A domain I region spans residues 1-64 (MIAYIQGSIT…QDAHTLYGFS (64 aa)). Residues 65–143 (TIEEKQCFLQ…KVGNMLSLQP (79 aa)) are domain II. Positions 144-150 (SGQEAIY) are flexible linker. The domain III stretch occupies residues 150-194 (YQEALAALSKLGIHKSTAEKTVAAILKEHQGEITVESLIKLALKG).

It belongs to the RuvA family. In terms of assembly, homotetramer. Forms an RuvA(8)-RuvB(12)-Holliday junction (HJ) complex. HJ DNA is sandwiched between 2 RuvA tetramers; dsDNA enters through RuvA and exits via RuvB. An RuvB hexamer assembles on each DNA strand where it exits the tetramer. Each RuvB hexamer is contacted by two RuvA subunits (via domain III) on 2 adjacent RuvB subunits; this complex drives branch migration. In the full resolvosome a probable DNA-RuvA(4)-RuvB(12)-RuvC(2) complex forms which resolves the HJ.

It is found in the cytoplasm. The RuvA-RuvB-RuvC complex processes Holliday junction (HJ) DNA during genetic recombination and DNA repair, while the RuvA-RuvB complex plays an important role in the rescue of blocked DNA replication forks via replication fork reversal (RFR). RuvA specifically binds to HJ cruciform DNA, conferring on it an open structure. The RuvB hexamer acts as an ATP-dependent pump, pulling dsDNA into and through the RuvAB complex. HJ branch migration allows RuvC to scan DNA until it finds its consensus sequence, where it cleaves and resolves the cruciform DNA. The sequence is that of Holliday junction branch migration complex subunit RuvA from Amoebophilus asiaticus (strain 5a2).